A 461-amino-acid chain; its full sequence is Alcaligin biosynthesis enzyme (461 aa).

9 to 15 (VAIGIGP) contacts FAD.

This sequence belongs to the lysine N(6)-hydroxylase/L-ornithine N(5)-oxygenase family. Requires FAD as cofactor.

The protein operates within siderophore biosynthesis; alcaligin biosynthesis. The polypeptide is Alcaligin biosynthesis enzyme (alcA) (Bordetella parapertussis (strain 12822 / ATCC BAA-587 / NCTC 13253)).